The chain runs to 140 residues: 3-hydroxyacyl-[acyl-carrier-protein] dehydratase FabZ (140 aa).

The active site involves His47.

This sequence belongs to the thioester dehydratase family. FabZ subfamily.

It is found in the cytoplasm. It catalyses the reaction a (3R)-hydroxyacyl-[ACP] = a (2E)-enoyl-[ACP] + H2O. In terms of biological role, involved in unsaturated fatty acids biosynthesis. Catalyzes the dehydration of short chain beta-hydroxyacyl-ACPs and long chain saturated and unsaturated beta-hydroxyacyl-ACPs. The protein is 3-hydroxyacyl-[acyl-carrier-protein] dehydratase FabZ of Streptococcus agalactiae serotype III (strain NEM316).